The following is a 950-amino-acid chain: UPF0182 protein P9303_14611 (950 aa).

Transmembrane regions (helical) follow at residues 20 to 40 (LLLS…WLWF), 53 to 73 (WLWQ…CQLW), 102 to 122 (LLGC…LAWL), 141 to 161 (IWAL…MLGN), 173 to 193 (CFCF…ALAI), 209 to 229 (FGLG…AQLV), 259 to 279 (CDVM…LLWL), 308 to 328 (SLAS…PWIQ), and 335 to 355 (LIAS…APFV).

It belongs to the UPF0182 family.

The protein resides in the cell membrane. This Prochlorococcus marinus (strain MIT 9303) protein is UPF0182 protein P9303_14611.